The primary structure comprises 775 residues: Kinesin-like protein KIF3B (775 aa).

One can recognise a Kinesin motor domain in the interval 9-341; sequence SVKVVVRCRP…LRYANRAKNI (333 aa). Position 97-104 (97-104) interacts with ATP; sequence GQTGTGKT. The segment at 372–419 is disordered; the sequence is KRSGRKRRRRRRRRVGEGGEEFEDGEDEEDDDDDDEDEEEGVDADKNI. Residues 374 to 385 show a composition bias toward basic residues; sequence SGRKRRRRRRRR. Over residues 389 to 413 the composition is skewed to acidic residues; that stretch reads GGEEFEDGEDEEDDDDDDEDEEEGV. A coiled-coil region spans residues 501–591; sequence LELKRQEIAE…QNELTRELKL (91 aa). The segment at 716-775 is disordered; that stretch reads FHASLGSSPGLSASAAGFSKKPKSGRPKTGKKVSTPTSAHSPLSGSGSPLYPQSRGLVPK. A compositionally biased stretch (low complexity) spans 718-734; the sequence is ASLGSSPGLSASAAGFS. The segment covering 735 to 746 has biased composition (basic residues); the sequence is KKPKSGRPKTGK. Positions 756-765 are enriched in low complexity; that stretch reads SPLSGSGSPL.

The protein belongs to the TRAFAC class myosin-kinesin ATPase superfamily. Kinesin family. Heterodimer of KIF3A and KIF3B. KIF3A/KIF3B heterodimer interacts with KIFAP3 forming a heterotrimeric (KIF3A/KIF3B/KIFAP3) complex.

Its subcellular location is the cytoplasm. The protein resides in the cytoskeleton. It localises to the cell projection. It is found in the cilium. The protein localises to the dendritic spine. Microtubule-based molecular motor that transport intracellular cargos, such as vesicles, organelles and protein complexes. Uses ATP hydrolysis to generate force to bind and move along the microtubule. Plays a role in cilia formation. Required for photoreceptor development. This is Kinesin-like protein KIF3B from Danio rerio (Zebrafish).